A 134-amino-acid polypeptide reads, in one-letter code: ATP synthase epsilon chain (134 aa).

The protein belongs to the ATPase epsilon chain family. F-type ATPases have 2 components, CF(1) - the catalytic core - and CF(0) - the membrane proton channel. CF(1) has five subunits: alpha(3), beta(3), gamma(1), delta(1), epsilon(1). CF(0) has three main subunits: a, b and c.

It is found in the cell membrane. Its function is as follows. Produces ATP from ADP in the presence of a proton gradient across the membrane. In Pelotomaculum thermopropionicum (strain DSM 13744 / JCM 10971 / SI), this protein is ATP synthase epsilon chain.